The primary structure comprises 95 residues: Large ribosomal subunit protein uL23 (95 aa).

Belongs to the universal ribosomal protein uL23 family. In terms of assembly, part of the 50S ribosomal subunit. Contacts protein L29, and trigger factor when it is bound to the ribosome.

One of the early assembly proteins it binds 23S rRNA. One of the proteins that surrounds the polypeptide exit tunnel on the outside of the ribosome. Forms the main docking site for trigger factor binding to the ribosome. The protein is Large ribosomal subunit protein uL23 of Bacillus pumilus (strain SAFR-032).